The following is a 383-amino-acid chain: Probable assembly chaperone of rpl4 (383 aa).

A compositionally biased stretch (basic residues) spans 1-12 (MGKPRPHKKKAS). Positions 1-33 (MGKPRPHKKKASKTREKSVLSAGGSISKRKMNE) are disordered. TPR repeat units lie at residues 35–68 (PRKLLEQATILLQTGQADAALSIAQQALEIATSN), 73–106 (LSSLNTIAEIYVELGEIDLARKHFLQAVELDPTG), 116–147 (AEKFLWLAQLSELGGKDSVQWFEKGVGALRGI), and 193–226 (PEVLQTLASIRISQLREDDARAALSRSLELWKDL). The interval 345 to 383 (NKELGEEMEDDSNVEDGEGEGEEEWEGIESDSDHEMADS) is disordered. The span at 350–374 (EEMEDDSNVEDGEGEGEEEWEGIES) shows a compositional bias: acidic residues.

Belongs to the ACL4 family.

The protein resides in the cytoplasm. It is found in the nucleus. Acts as a chaperone for the L4 ribosomal subunit, required for hierarchical ribosome assembly. Shields ribosomal protein L4 until timely release and insertion into the pre-ribosome is possible, once ribosomal protein L18 is present. The polypeptide is Probable assembly chaperone of rpl4 (Emericella nidulans (strain FGSC A4 / ATCC 38163 / CBS 112.46 / NRRL 194 / M139) (Aspergillus nidulans)).